The chain runs to 105 residues: Large ribosomal subunit protein uL24 (105 aa).

It belongs to the universal ribosomal protein uL24 family. Part of the 50S ribosomal subunit.

Its function is as follows. One of two assembly initiator proteins, it binds directly to the 5'-end of the 23S rRNA, where it nucleates assembly of the 50S subunit. One of the proteins that surrounds the polypeptide exit tunnel on the outside of the subunit. This chain is Large ribosomal subunit protein uL24, found in Clostridium novyi (strain NT).